Consider the following 64-residue polypeptide: Beta-insect depressant toxin BmKIT4 (64 aa).

An LCN-type CS-alpha/beta domain is found at 1–61; it reads DGYIRGSNGC…TWKSESNTCG (61 aa). 4 disulfides stabilise this stretch: cysteine 10-cysteine 60, cysteine 14-cysteine 35, cysteine 21-cysteine 42, and cysteine 25-cysteine 44. Cysteine 60 is modified (cysteine amide).

This sequence belongs to the long (4 C-C) scorpion toxin superfamily. Sodium channel inhibitor family. Beta subfamily. In terms of tissue distribution, expressed by the venom gland.

It is found in the secreted. Its function is as follows. Depressant insect beta-toxins cause a transient contraction paralysis followed by a slow flaccid paralysis. They bind voltage-independently at site-4 of sodium channels (Nav) and shift the voltage of activation toward more negative potentials thereby affecting sodium channel activation and promoting spontaneous and repetitive firing. This toxin is active only on insects. In Olivierus martensii (Manchurian scorpion), this protein is Beta-insect depressant toxin BmKIT4.